The primary structure comprises 277 residues: Shikimate dehydrogenase (NADP(+)) (277 aa).

Shikimate is bound by residues 15–17 (SLS) and Thr-62. Lys-66 (proton acceptor) is an active-site residue. Residues Asn-87 and Asp-102 each coordinate shikimate. Residues 127–131 (GAGGA), 151–156 (NRTVSK), and Ile-219 contribute to the NADP(+) site. Tyr-221 provides a ligand contact to shikimate. Residue Gly-242 participates in NADP(+) binding.

The protein belongs to the shikimate dehydrogenase family. In terms of assembly, homodimer.

The catalysed reaction is shikimate + NADP(+) = 3-dehydroshikimate + NADPH + H(+). The protein operates within metabolic intermediate biosynthesis; chorismate biosynthesis; chorismate from D-erythrose 4-phosphate and phosphoenolpyruvate: step 4/7. Involved in the biosynthesis of the chorismate, which leads to the biosynthesis of aromatic amino acids. Catalyzes the reversible NADPH linked reduction of 3-dehydroshikimate (DHSA) to yield shikimate (SA). In Geobacillus sp. (strain WCH70), this protein is Shikimate dehydrogenase (NADP(+)).